Consider the following 364-residue polypeptide: Fructose-1,6-bisphosphatase class 1 2 (364 aa).

Residues Glu101, Asp123, Leu125, and Asp126 each contribute to the Mg(2+) site. Residues 126–129 (DGSS) and Asn218 contribute to the substrate site. Glu290 is a binding site for Mg(2+).

This sequence belongs to the FBPase class 1 family. As to quaternary structure, homotetramer. The cofactor is Mg(2+).

Its subcellular location is the cytoplasm. The enzyme catalyses beta-D-fructose 1,6-bisphosphate + H2O = beta-D-fructose 6-phosphate + phosphate. It participates in carbohydrate biosynthesis; gluconeogenesis. In Cupriavidus necator (strain ATCC 17699 / DSM 428 / KCTC 22496 / NCIMB 10442 / H16 / Stanier 337) (Ralstonia eutropha), this protein is Fructose-1,6-bisphosphatase class 1 2.